The sequence spans 323 residues: NADH-cytochrome b5 reductase 2 (323 aa).

Residues 32–48 form a helical membrane-spanning segment; it reads LAPIYLGVGLIGLGVGL. In terms of domain architecture, FAD-binding FR-type spans 72–177; that stretch reads QGWVDLKLAQ…KGPIPKYPWE (106 aa). FAD is bound at residue 180 to 215; it reads KHKHICLIAGGTGITPMYQLARKIFKDPEDQTKVTL.

Belongs to the flavoprotein pyridine nucleotide cytochrome reductase family. The cofactor is FAD.

Its subcellular location is the mitochondrion outer membrane. The enzyme catalyses 2 Fe(III)-[cytochrome b5] + NADH = 2 Fe(II)-[cytochrome b5] + NAD(+) + H(+). Its function is as follows. May mediate the reduction of outer membrane cytochrome b5. The chain is NADH-cytochrome b5 reductase 2 (mcr1) from Aspergillus fumigatus (strain ATCC MYA-4609 / CBS 101355 / FGSC A1100 / Af293) (Neosartorya fumigata).